Consider the following 100-residue polypeptide: Small ribosomal subunit protein bS20 (100 aa).

This sequence belongs to the bacterial ribosomal protein bS20 family.

In terms of biological role, binds directly to 16S ribosomal RNA. The sequence is that of Small ribosomal subunit protein bS20 from Synechococcus sp. (strain JA-3-3Ab) (Cyanobacteria bacterium Yellowstone A-Prime).